The primary structure comprises 359 residues: Protein RecA (359 aa).

Residue 64–71 participates in ATP binding; that stretch reads GHESSGKT. The interval 329–359 is disordered; the sequence is KYSNKDSNDSPKEGSKIKTKVNPAVTQDELI. The span at 331–344 shows a compositional bias: basic and acidic residues; sequence SNKDSNDSPKEGSK.

This sequence belongs to the RecA family.

Its subcellular location is the cytoplasm. Its function is as follows. Can catalyze the hydrolysis of ATP in the presence of single-stranded DNA, the ATP-dependent uptake of single-stranded DNA by duplex DNA, and the ATP-dependent hybridization of homologous single-stranded DNAs. It interacts with LexA causing its activation and leading to its autocatalytic cleavage. The sequence is that of Protein RecA from Francisella tularensis subsp. tularensis (strain FSC 198).